Consider the following 633-residue polypeptide: Chitinase 2 (633 aa).

One can recognise a GH18 domain in the interval 151–602 (PKLSAYITDW…NAAREGLGYV (452 aa)). Chitin is bound by residues 275 to 276 (QN) and 306 to 309 (GGWS). Glutamate 349 serves as the catalytic Proton donor. Chitin contacts are provided by residues tyrosine 350, 422–425 (MSYD), and tryptophan 582.

This sequence belongs to the glycosyl hydrolase 18 family. Semipurified toxin complex consists of at least YenA1-YenA2-YenB-YenC1-YenC2-Chi1-Chi2. The Yen-TC:K9 subcomplex is about 26 nm tall and 22 nm in diameter with 5-fold symmetry and 5 copies of YenA1, YenA2, Chi1 and Chi2; the chitinase subunits may be solvent accessible on the exterior the complex. The Yen-TC:K9 subcomplex has no insecticidal activity. The native complex with additional YenB, YenC1 and YenC2 subunits is 16 nm taller and is insecticidal; the toxicity-conferring subunits are present at about 1 copy each.

It localises to the secreted. It catalyses the reaction Random endo-hydrolysis of N-acetyl-beta-D-glucosaminide (1-&gt;4)-beta-linkages in chitin and chitodextrins.. With respect to regulation, toxin complex is secreted when grown at 25 degrees Celsius or less; at higher temperatures the proteins are present intracellularly but not secreted. In terms of biological role, part of an orally active toxin complex (TC) with strong insecticidal effects on larvae of the Coleoptera Costelytra zealandica, Acrossidius tasmania and Adoryphorus couloni and some Lepidoptera larvae. The TC has an endochitinase activity. This subunit might aid infection by degradation of the larval peritrophic membrane. This is Chitinase 2 from Yersinia entomophaga.